Reading from the N-terminus, the 212-residue chain is Acyl-homoserine-lactone synthase (212 aa).

The protein belongs to the autoinducer synthase family.

The enzyme catalyses a fatty acyl-[ACP] + S-adenosyl-L-methionine = an N-acyl-L-homoserine lactone + S-methyl-5'-thioadenosine + holo-[ACP] + H(+). Required for the synthesis of OHHL (N-(3-oxohexanoyl)-L-homoserine lactone), an autoinducer molecule which binds to TraR and thus acts in the control of conjugal transfer. This Rhizobium radiobacter (Agrobacterium tumefaciens) protein is Acyl-homoserine-lactone synthase (traI).